The following is a 141-amino-acid chain: uncharacterized protein (141 aa).

This is an uncharacterized protein from Sinorhizobium fredii (strain NBRC 101917 / NGR234).